Here is a 510-residue protein sequence, read N- to C-terminus: Serine/threonine-protein kinase UL13 homolog (510 aa).

Residues 1 to 63 (MDADDTPPNL…WANPSTATCM (63 aa)) are disordered. Residues 132-458 (RDRPRFAGRG…RRIFQCHAVR (327 aa)) form the Protein kinase domain. Residues 138 to 146 (AGRGTYGRV) and lysine 157 contribute to the ATP site. Aspartate 257 functions as the Proton acceptor in the catalytic mechanism.

This sequence belongs to the protein kinase superfamily. Ser/Thr protein kinase family. Autophosphorylated.

It is found in the virion tegument. The protein localises to the host nucleus. The enzyme catalyses L-seryl-[protein] + ATP = O-phospho-L-seryl-[protein] + ADP + H(+). The catalysed reaction is L-threonyl-[protein] + ATP = O-phospho-L-threonyl-[protein] + ADP + H(+). Its function is as follows. Multifunctional serine/threonine kinase that plays a role in several processes including egress of virus particles from the nucleus, modulation of the actin cytoskeleton and regulation of viral and cellular gene expression. Regulates the nuclear localization of viral envelopment factor proteins 24 and 27, by phosphorylating the protein kinase ORF66, indicating a role in nuclear egress. Disrupts host nuclear lamins, including LMNA and LMNB1. Phosphorylates the viral Fc receptor composed of glycoproteins E (gE) and I (gI). Phosphorylation of glycoprotein E (gE) by UL13 alters its subcellular localization, from the host early endosome to the plasma membrane. Participates in the transcriptional regulation of cellular and viral mRNAs mainly by phosphorylating the viral transcriptional regulator IE63. This is Serine/threonine-protein kinase UL13 homolog from Varicella-zoster virus (strain Dumas) (HHV-3).